A 762-amino-acid polypeptide reads, in one-letter code: Cellulose synthase-like protein H2 (762 aa).

The span at 1-15 shows a compositional bias: low complexity; that stretch reads MAVVAAAAATGSTTR. Positions 1–39 are disordered; that stretch reads MAVVAAAAATGSTTRSGGGGGEGTRSGRKKPPPPPLQER. 2 consecutive transmembrane segments (helical) span residues 47-67 and 81-101; these read AWAW…LLAL and GVWR…ALNV. Active-site residues include D180 and D470. The next 6 helical transmembrane spans lie at 541–561, 582–602, 619–639, 673–693, 708–728, and 739–759; these read LAYL…CYGL, FSVP…EYMA, IISV…SLGL, LPVF…VTVG, APGI…FPFV, and GIPW…VTFC.

It belongs to the glycosyltransferase 2 family. Plant cellulose synthase-like H subfamily.

It is found in the golgi apparatus membrane. Functionally, thought to be a Golgi-localized beta-glycan synthase that polymerize the backbones of noncellulosic polysaccharides (hemicelluloses) of plant cell wall. The polypeptide is Cellulose synthase-like protein H2 (CSLH2) (Oryza sativa subsp. japonica (Rice)).